The chain runs to 99 residues: DNA-directed RNA polymerase subunit omega (99 aa).

It belongs to the RNA polymerase subunit omega family. The RNAP catalytic core consists of 2 alpha, 1 beta, 1 beta' and 1 omega subunit. When a sigma factor is associated with the core the holoenzyme is formed, which can initiate transcription.

The enzyme catalyses RNA(n) + a ribonucleoside 5'-triphosphate = RNA(n+1) + diphosphate. Functionally, promotes RNA polymerase assembly. Latches the N- and C-terminal regions of the beta' subunit thereby facilitating its interaction with the beta and alpha subunits. The polypeptide is DNA-directed RNA polymerase subunit omega (Thermus thermophilus (strain ATCC BAA-163 / DSM 7039 / HB27)).